The sequence spans 386 residues: Lycopene beta-cyclase (386 aa).

4–34 (DVLLAGAGLANGLIALALRAARPDLRVLLLD) lines the NAD(+) pocket.

It belongs to the lycopene cyclase family. Requires FAD as cofactor.

It carries out the reaction a carotenoid psi-end group = a carotenoid beta-end derivative. The enzyme catalyses all-trans-lycopene = gamma-carotene. The catalysed reaction is gamma-carotene = all-trans-beta-carotene. It participates in carotenoid biosynthesis; astaxanthin biosynthesis. In terms of biological role, catalyzes the double cyclization reaction which converts lycopene to beta-carotene. This chain is Lycopene beta-cyclase, found in Paracoccus sp. (strain N81106 / MBIC 01143) (Agrobacterium aurantiacum).